Here is a 682-residue protein sequence, read N- to C-terminus: MLLKFEASSELRLVDPSVSLTVLRKIRLSHLPDMTMTSESSGKKCGEGDGKVAGKSQRKVGLVYDETMCKHDTPNGKVDVECPDRIRVIWEKLQLAGVTQRCVVLGGSKAEDKHLKLVHTKKHVNLVKSISTKKKDSRRNKIASQLDSIYLNGGSSEAAYLAAGSVVKVAEKVAEGELDCGFAIVRPPGHHAESDEAMGFCLFNNVAVAASFLLNERPDLDVKKILIVDWDIHHGNGTQKMFWKDSRVLIFSVHRHDHGSFYPFGDDGDFNMVGEGPGEGFNINVPWEQGGCGDADYLAVWNHILIPVTKEFKPDIILLSAGFDAAIGDPLGGCCVTPYGYSVMLKKLMEFAHGKIVLALEGGYNLESLGKSSLACVQVLLEDKQIHGSSETYPLESTRRVIQAVRERLCTYWPSLDASMASNENLKNPSAERNSADALLREVEELKSLMAARDGELEARRKELKAKNKELEANEKELEAGLMLIRAREDVICGLHAKIESLQQERDEAVAKAERIDKELQEDRARSQEFKEDTEFCLSTLRREKELAIMAKNKDLEAKEKELEARLMLVHAREDKIHAKIERLQQERDEAVAKAERIDKELQEDRSRSRVGNGSFAFSQEFYEDMDLDELEPLSPEFNEDMDSEELEPFQVIKKNMERSHKKFIKDMECIKFIASERARVL.

The segment at 59–382 is histone deacetylase; that stretch reads KVGLVYDETM…SLACVQVLLE (324 aa). Histidine 191 acts as the Proton donor/acceptor in catalysis. Residues aspartate 231, histidine 233, and aspartate 324 each coordinate Zn(2+). Residues 430–608 are a coiled coil; that stretch reads SAERNSADAL…DKELQEDRSR (179 aa).

The protein belongs to the histone deacetylase family. HD type 2 subfamily. The cofactor is Zn(2+). As to expression, expressed in roots, stems, young rosette leaves, flowers and siliques.

It localises to the nucleus. It is found in the cytoplasm. The enzyme catalyses N(6)-acetyl-L-lysyl-[histone] + H2O = L-lysyl-[histone] + acetate. Functionally, responsible for the deacetylation of lysine residues on the N-terminal part of the core histones (H2A, H2B, H3 and H4). Histone deacetylation gives a tag for epigenetic repression and plays an important role in transcriptional regulation, cell cycle progression and developmental events. Histone deacetylases act via the formation of large multiprotein complexes. Required for appropriate cellular patterning in the root epidermis. Involved in the differentiation of hair and non-hair cells in the root epidermis. Is not directly involved in the regulation of the expression of pattern genes. Regulates the transcription of certain kinase genes, which are components of a positional information relay system, by changing their histone acetylation status. The chain is Histone deacetylase 18 from Arabidopsis thaliana (Mouse-ear cress).